The following is a 155-amino-acid chain: Small ribosomal subunit protein uS7c (155 aa).

This sequence belongs to the universal ribosomal protein uS7 family. In terms of assembly, part of the 30S ribosomal subunit.

It is found in the plastid. The protein localises to the chloroplast. Its function is as follows. One of the primary rRNA binding proteins, it binds directly to 16S rRNA where it nucleates assembly of the head domain of the 30S subunit. This Euonymus alatus (Burning bush) protein is Small ribosomal subunit protein uS7c (rps7).